Reading from the N-terminus, the 462-residue chain is Putative endoglucanase type B (462 aa).

A signal peptide spans 1–16 (MAYKLILAAFAATALA). Positions 25 to 61 (CSNGVWAQCGGQNWSGTPCCTSGNKCVKLNDFYSQCQ) constitute a CBM1 domain. 2 disulfides stabilise this stretch: cysteine 33-cysteine 50 and cysteine 44-cysteine 60. Asparagine 37 carries an N-linked (GlcNAc...) asparagine glycan. Low complexity predominate over residues 64 to 100 (SAEPSSTAAGPSSTTATKTTATGGSSTTAGGSVTSAP). The tract at residues 64–102 (SAEPSSTAAGPSSTTATKTTATGGSSTTAGGSVTSAPPA) is disordered. The linker stretch occupies residues 66 to 99 (EPSSTAAGPSSTTATKTTATGGSSTTAGGSVTSA). Positions 100–462 (PPAASDNPYA…LLDNANPSFL (363 aa)) are catalytic. The active site involves aspartate 190. Residues cysteine 191 and cysteine 250 are joined by a disulfide bond. N-linked (GlcNAc...) asparagine glycosylation occurs at asparagine 223. Aspartate 236 functions as the Proton donor in the catalytic mechanism. N-linked (GlcNAc...) asparagine glycans are attached at residues asparagine 272 and asparagine 317. A disulfide bond links cysteine 383 and cysteine 430. Aspartate 416 acts as the Nucleophile in catalysis.

The protein belongs to the glycosyl hydrolase 6 (cellulase B) family.

The enzyme catalyses Endohydrolysis of (1-&gt;4)-beta-D-glucosidic linkages in cellulose, lichenin and cereal beta-D-glucans.. This is Putative endoglucanase type B from Fusarium oxysporum (Fusarium vascular wilt).